Here is a 346-residue protein sequence, read N- to C-terminus: Probable electron transfer flavoprotein subunit alpha, mitochondrial (346 aa).

Position 285-313 (285-313 (LYVAIGISGAIQHLAGMKESKMIIAINKD)) interacts with FAD.

This sequence belongs to the ETF alpha-subunit/FixB family. In terms of assembly, heterodimer of an alpha and a beta subunit. Requires FAD as cofactor.

It is found in the mitochondrion matrix. Functionally, the electron transfer flavoprotein serves as a specific electron acceptor for several dehydrogenases, including five acyl-CoA dehydrogenases, glutaryl-CoA and sarcosine dehydrogenase. It transfers the electrons to the main mitochondrial respiratory chain via ETF-ubiquinone oxidoreductase (ETF dehydrogenase). In Cryptococcus gattii serotype B (strain WM276 / ATCC MYA-4071) (Filobasidiella gattii), this protein is Probable electron transfer flavoprotein subunit alpha, mitochondrial (ETF1).